Consider the following 131-residue polypeptide: Profilin-5 (131 aa).

Cysteines 13 and 115 form a disulfide. The Involved in PIP2 interaction motif lies at 81–97; sequence AVIRGKKGAGGITIKKT. Residue threonine 111 is modified to Phosphothreonine.

It belongs to the profilin family. Occurs in many kinds of cells as a complex with monomeric actin in a 1:1 ratio. Post-translationally, phosphorylated by MAP kinases.

Its subcellular location is the cytoplasm. It is found in the cytoskeleton. Functionally, binds to actin and affects the structure of the cytoskeleton. At high concentrations, profilin prevents the polymerization of actin, whereas it enhances it at low concentrations. The protein is Profilin-5 of Phleum pratense (Common timothy).